The sequence spans 157 residues: N5-carboxyaminoimidazole ribonucleotide mutase (157 aa).

Substrate-binding residues include Ser8, Asp11, and Arg38.

This sequence belongs to the AIR carboxylase family. Class I subfamily.

It carries out the reaction 5-carboxyamino-1-(5-phospho-D-ribosyl)imidazole + H(+) = 5-amino-1-(5-phospho-D-ribosyl)imidazole-4-carboxylate. The protein operates within purine metabolism; IMP biosynthesis via de novo pathway; 5-amino-1-(5-phospho-D-ribosyl)imidazole-4-carboxylate from 5-amino-1-(5-phospho-D-ribosyl)imidazole (N5-CAIR route): step 2/2. In terms of biological role, catalyzes the conversion of N5-carboxyaminoimidazole ribonucleotide (N5-CAIR) to 4-carboxy-5-aminoimidazole ribonucleotide (CAIR). The polypeptide is N5-carboxyaminoimidazole ribonucleotide mutase (Methanocaldococcus jannaschii (strain ATCC 43067 / DSM 2661 / JAL-1 / JCM 10045 / NBRC 100440) (Methanococcus jannaschii)).